We begin with the raw amino-acid sequence, 483 residues long: Aspartyl/glutamyl-tRNA(Asn/Gln) amidotransferase subunit B (483 aa).

The protein belongs to the GatB/GatE family. GatB subfamily. As to quaternary structure, heterotrimer of A, B and C subunits.

The enzyme catalyses L-glutamyl-tRNA(Gln) + L-glutamine + ATP + H2O = L-glutaminyl-tRNA(Gln) + L-glutamate + ADP + phosphate + H(+). It catalyses the reaction L-aspartyl-tRNA(Asn) + L-glutamine + ATP + H2O = L-asparaginyl-tRNA(Asn) + L-glutamate + ADP + phosphate + 2 H(+). Functionally, allows the formation of correctly charged Asn-tRNA(Asn) or Gln-tRNA(Gln) through the transamidation of misacylated Asp-tRNA(Asn) or Glu-tRNA(Gln) in organisms which lack either or both of asparaginyl-tRNA or glutaminyl-tRNA synthetases. The reaction takes place in the presence of glutamine and ATP through an activated phospho-Asp-tRNA(Asn) or phospho-Glu-tRNA(Gln). This chain is Aspartyl/glutamyl-tRNA(Asn/Gln) amidotransferase subunit B, found in Herpetosiphon aurantiacus (strain ATCC 23779 / DSM 785 / 114-95).